A 345-amino-acid chain; its full sequence is Phosphate acyltransferase (345 aa).

Belongs to the PlsX family. Homodimer. Probably interacts with PlsY.

It localises to the cytoplasm. It catalyses the reaction a fatty acyl-[ACP] + phosphate = an acyl phosphate + holo-[ACP]. It participates in lipid metabolism; phospholipid metabolism. Functionally, catalyzes the reversible formation of acyl-phosphate (acyl-PO(4)) from acyl-[acyl-carrier-protein] (acyl-ACP). This enzyme utilizes acyl-ACP as fatty acyl donor, but not acyl-CoA. The sequence is that of Phosphate acyltransferase from Nitratidesulfovibrio vulgaris (strain ATCC 29579 / DSM 644 / CCUG 34227 / NCIMB 8303 / VKM B-1760 / Hildenborough) (Desulfovibrio vulgaris).